Consider the following 41-residue polypeptide: Large ribosomal subunit protein bL36B (41 aa).

This sequence belongs to the bacterial ribosomal protein bL36 family.

The protein is Large ribosomal subunit protein bL36B of Actinobacillus pleuropneumoniae serotype 5b (strain L20).